Consider the following 348-residue polypeptide: Ion-translocating oxidoreductase complex subunit D (348 aa).

The next 5 helical transmembrane spans lie at 15–35 (LTAK…GMQA), 36–56 (YFFG…AVAI), 67–87 (PTAF…LAIS), 88–108 (IPPY…LLLA), and 125–145 (VAYA…LVPI). T186 is modified (FMN phosphoryl threonine). 5 consecutive transmembrane segments (helical) span residues 212–232 (LFAN…LLLI), 241–261 (IPAA…LLLP), 265–285 (LNVV…FIAT), 298–318 (LIFG…GNYP), and 320–340 (AVAF…HYTQ).

Belongs to the NqrB/RnfD family. As to quaternary structure, the complex is composed of six subunits: RnfA, RnfB, RnfC, RnfD, RnfE and RnfG. The cofactor is FMN.

It is found in the cell inner membrane. Its function is as follows. Part of a membrane-bound complex that couples electron transfer with translocation of ions across the membrane. This chain is Ion-translocating oxidoreductase complex subunit D, found in Actinobacillus pleuropneumoniae serotype 5b (strain L20).